Reading from the N-terminus, the 351-residue chain is Phosphoribosylformylglycinamidine cyclo-ligase (351 aa).

This sequence belongs to the AIR synthase family.

Its subcellular location is the cytoplasm. The enzyme catalyses 2-formamido-N(1)-(5-O-phospho-beta-D-ribosyl)acetamidine + ATP = 5-amino-1-(5-phospho-beta-D-ribosyl)imidazole + ADP + phosphate + H(+). It functions in the pathway purine metabolism; IMP biosynthesis via de novo pathway; 5-amino-1-(5-phospho-D-ribosyl)imidazole from N(2)-formyl-N(1)-(5-phospho-D-ribosyl)glycinamide: step 2/2. The sequence is that of Phosphoribosylformylglycinamidine cyclo-ligase from Azotobacter vinelandii (strain DJ / ATCC BAA-1303).